A 376-amino-acid chain; its full sequence is Rhodopsin (376 aa).

Residues methionine 1 to tryptophan 51 lie on the Extracellular side of the membrane. Residue asparagine 22 is glycosylated (N-linked (GlcNAc...) asparagine). Residues histidine 52–isoleucine 76 traverse the membrane as a helical segment. The Cytoplasmic portion of the chain corresponds to phenylalanine 77–asparagine 88. The helical transmembrane segment at leucine 89–cysteine 113 threads the bilayer. Residues tyrosine 114–tyrosine 128 are Extracellular-facing. A disulfide bridge links cysteine 125 with cysteine 202. The chain crosses the membrane as a helical span at residues alanine 129 to leucine 148. Over aspartate 149–threonine 167 the chain is Cytoplasmic. A helical transmembrane segment spans residues alanine 168–asparagine 191. Residues arginine 192 to serine 215 lie on the Extracellular side of the membrane. N-linked (GlcNAc...) asparagine glycosylation is present at asparagine 198. The helical transmembrane segment at tyrosine 216–valine 243 threads the bilayer. Topologically, residues serine 244–lysine 278 are cytoplasmic. The chain crosses the membrane as a helical span at residues valine 279 to isoleucine 302. At phenylalanine 303–serine 309 the chain is on the extracellular side. The chain crosses the membrane as a helical span at residues proline 310–serine 334. Lysine 321 carries the N6-(retinylidene)lysine modification. The Cytoplasmic segment spans residues histidine 335–alanine 376. Positions serine 353–alanine 376 are disordered. Residues threonine 358–valine 368 are compositionally biased toward polar residues.

This sequence belongs to the G-protein coupled receptor 1 family. Opsin subfamily. Post-translationally, phosphorylated on some or all of the serine and threonine residues present in the C-terminal region.

The protein localises to the membrane. Its function is as follows. Visual pigments are the light-absorbing molecules that mediate vision. They consist of an apoprotein, opsin, covalently linked to cis-retinal. The chain is Rhodopsin from Sphodromantis sp. (Mantis).